Reading from the N-terminus, the 176-residue chain is MAGLGLRLKAAKWTLRSGSGAVSREWSSEMGKGVRRFSTETENDVPTSGISRPLAEILKELNKKVPDSVIRTRVEDGCSIKYIPWHIVNRIMNMHAPEWSGEVRSVTYSPDGNTVTVAYRVTLYGTDAEIFRESTGTTSVDDKGYGDAVQKAEAMAFRRACARFGLGLHLYHEDAL.

The transit peptide at 1-37 (MAGLGLRLKAAKWTLRSGSGAVSREWSSEMGKGVRRF) directs the protein to the mitochondrion.

Belongs to the RAD52 family. As to quaternary structure, interacts with WHY2. As to expression, expressed in root vascular tissue, tips of primary and secondary roots, young leaves, hydathodes, stomatal guard cells, cauline leaves, flower buds, stipules, carpels, pistils and anther filaments.

It localises to the mitochondrion. The protein localises to the nucleus. Plant-specific single-stranded DNA-binding protein required for efficient heterologous recombination-dependent DNA repair in nuclear and mitochondrial compartments. Forms large nucleo-protein complexes with WHY2 in mitochondria. Binds ssDNA with high affinity, but with little sequence specificity. Involved in double-stranded DNA break repair. Involved in the hydrolytic splicing pathway in mitochondrion. Facilitates the excision of two cis-spliced group II introns, NAD1 intron 2 and NAD2 intron 1. In Arabidopsis thaliana (Mouse-ear cress), this protein is DNA repair RAD52-like protein 1, mitochondrial.